A 129-amino-acid chain; its full sequence is Follitropin subunit beta (129 aa).

A signal peptide spans 1 to 20 (MKSLQFCFLFCCWKAICCNS). Intrachain disulfides connect Cys-21–Cys-69, Cys-35–Cys-84, Cys-38–Cys-122, Cys-46–Cys-100, Cys-50–Cys-102, and Cys-105–Cys-112. Asn-25 and Asn-42 each carry an N-linked (GlcNAc...) asparagine glycan.

Belongs to the glycoprotein hormones subunit beta family. Heterodimer. The active follitropin is a heterodimer composed of an alpha chain/CGA shared with other hormones and a unique beta chain/FSHB shown here.

The protein localises to the secreted. Together with the alpha chain CGA constitutes follitropin, the follicle-stimulating hormone, and provides its biological specificity to the hormone heterodimer. Binds FSHR, a G protein-coupled receptor, on target cells to activate downstream signaling pathways. Follitropin is involved in follicle development and spermatogenesis in reproductive organs. This chain is Follitropin subunit beta (FSHB), found in Sus scrofa (Pig).